A 191-amino-acid polypeptide reads, in one-letter code: Nascent polypeptide-associated complex subunit alpha (191 aa).

Residues S24 to A89 form the NAC-A/B domain. The tract at residues Q126–G149 is disordered. Low complexity predominate over residues D127–S139. One can recognise a UBA domain in the interval V153–Q191.

This sequence belongs to the NAC-alpha family. As to quaternary structure, part of the nascent polypeptide-associated complex (NAC), consisting of EGD2 and EGD1. NAC associates with ribosomes via EGD1.

The protein localises to the cytoplasm. It is found in the nucleus. Its function is as follows. Component of the nascent polypeptide-associated complex (NAC), a dynamic component of the ribosomal exit tunnel, protecting the emerging polypeptides from interaction with other cytoplasmic proteins to ensure appropriate nascent protein targeting. The NAC complex also promotes mitochondrial protein import by enhancing productive ribosome interactions with the outer mitochondrial membrane and blocks the inappropriate interaction of ribosomes translating non-secretory nascent polypeptides with translocation sites in the membrane of the endoplasmic reticulum. EGD2 may also be involved in transcription regulation. This is Nascent polypeptide-associated complex subunit alpha (EGD2) from Cryptococcus neoformans var. neoformans serotype D (strain B-3501A) (Filobasidiella neoformans).